Consider the following 607-residue polypeptide: Thymidine kinase (607 aa).

Disordered regions lie at residues 1–160 (MAGF…ADST) and 180–215 (DDKS…PSGL). The span at 17-32 (KCQEDESPENERHENF) shows a compositional bias: basic and acidic residues. Composition is skewed to polar residues over residues 88–106 (AAVT…TSCP), 148–160 (RKTS…ADST), and 194–203 (RRPSSHSALK). ATP is bound at residue 291–298 (GAPGVGKT). The active-site Proton acceptor is Glu317. Gln355 contributes to the substrate binding site. Residue Arg445 participates in ATP binding. Arg451 is a binding site for substrate.

Belongs to the herpesviridae thymidine kinase family. In terms of assembly, homodimer.

The protein localises to the virion tegument. The protein resides in the host nucleus. It catalyses the reaction thymidine + ATP = dTMP + ADP + H(+). Catalyzes the transfer of the gamma-phospho group of ATP to thymidine to generate dTMP in the salvage pathway of pyrimidine synthesis. The dTMP serves as a substrate for DNA polymerase during viral DNA replication. Allows the virus to be reactivated and to grow in non-proliferative cells lacking a high concentration of phosphorylated nucleic acid precursors. The sequence is that of Thymidine kinase from Homo sapiens (Human).